The chain runs to 87 residues: U15-lycotoxin-Ls1h (87 aa).

A signal peptide spans 1 to 20; sequence MNSKIFAVLLLLGLLSCVLS. The WAP domain maps to 21-66; sequence DQYCPKSSITACKKMNTRNDCCKDDDCTGGSWCCATPCGNFCKYPT. 5 disulfides stabilise this stretch: C24–C54, C32–C58, C41–C53, C42–C80, and C47–C62.

Belongs to the venom protein 11 family. 01 (wap-1) subfamily. Contains 5 disulfide bonds. In terms of tissue distribution, expressed by the venom gland.

The protein localises to the secreted. In terms of biological role, has antibacterial activity. In Lycosa singoriensis (Wolf spider), this protein is U15-lycotoxin-Ls1h.